Here is a 466-residue protein sequence, read N- to C-terminus: Probable fibrosin-1 (466 aa).

A Glycyl lysine isopeptide (Lys-Gly) (interchain with G-Cter in SUMO2) cross-link involves residue Lys8. 2 positions are modified to asymmetric dimethylarginine: Arg229 and Arg239. 2 disordered regions span residues 236-315 and 410-466; these read AWVR…AAAA and LLYS…RADR. The span at 248–272 shows a compositional bias: basic and acidic residues; sequence GSDKERPMERREPSVTKEEKDRDLP. Residue Ser281 is modified to Phosphoserine. Positions 288 to 311 are enriched in basic and acidic residues; the sequence is RAGEEGARPAKESVRVKEERKEEA. Over residues 442-459 the composition is skewed to pro residues; it reads APPPLVPAPRPSSPPRAP.

The protein is Probable fibrosin-1 (Fbrs) of Mus musculus (Mouse).